We begin with the raw amino-acid sequence, 471 residues long: Probable flavin-containing monoamine oxidase B (471 aa).

Position 406 is an S-8alpha-FAD cysteine (Cys406).

The protein belongs to the flavin monoamine oxidase family. The cofactor is FAD.

It catalyses the reaction a secondary aliphatic amine + O2 + H2O = a primary amine + an aldehyde + H2O2. In Dictyostelium discoideum (Social amoeba), this protein is Probable flavin-containing monoamine oxidase B (maoB-1).